Here is a 323-residue protein sequence, read N- to C-terminus: Mitochondrial glutamate carrier 1 (323 aa).

Solcar repeat units lie at residues 6–93 (ISLP…FRHQ), 101–214 (LTLP…LNQL), and 223–312 (SPFY…GIAE). 6 consecutive transmembrane segments (helical) span residues 12–32 (LING…IDLA), 62–82 (YFGM…EKAI), 107–127 (MLAG…MEML), 189–209 (GLGA…PLFA), 223–243 (SPFY…AVAV), and 292–312 (ALVI…GIAE).

It belongs to the mitochondrial carrier (TC 2.A.29) family. Detected in insulin-secreting beta-cells and pancreatic islets (at the protein level).

It localises to the mitochondrion inner membrane. It carries out the reaction L-glutamate(in) + H(+)(in) = L-glutamate(out) + H(+)(out). Functionally, mitochondrial glutamate/H(+) symporter. Responsible for the transport of glutamate from the cytosol into the mitochondrial matrix with the concomitant import of a proton. Plays a role in the control of glucose-stimulated insulin secretion. This Rattus norvegicus (Rat) protein is Mitochondrial glutamate carrier 1.